The following is a 305-amino-acid chain: 17-beta-hydroxysteroid dehydrogenase type 3 (305 aa).

44-73 (GQWAVITGAGDGIGKAYSFELARHGLNVVL) is a binding site for NADP(+). Ser-181 is a substrate binding site. Tyr-194 functions as the Proton acceptor in the catalytic mechanism.

Belongs to the short-chain dehydrogenases/reductases (SDR) family. 17-beta-HSD 3 subfamily. In terms of tissue distribution, expressed in the testes.

It is found in the endoplasmic reticulum. The enzyme catalyses a 17beta-hydroxy steroid + NADP(+) = a 17-oxo steroid + NADPH + H(+). It carries out the reaction testosterone + NADP(+) = androst-4-ene-3,17-dione + NADPH + H(+). It catalyses the reaction 17beta-estradiol + NADP(+) = estrone + NADPH + H(+). The catalysed reaction is 3beta-hydroxyandrost-5-en-17-one + NADPH + H(+) = androst-5-en-3beta,17beta-diol + NADP(+). The enzyme catalyses 17beta-hydroxy-5alpha-androstan-3-one + NADP(+) = 5alpha-androstan-3,17-dione + NADPH + H(+). It carries out the reaction androsterone + NADPH + H(+) = 5alpha-androstane-3alpha,17beta-diol + NADP(+). It catalyses the reaction 3beta-hydroxy-5alpha-androstan-17-one + NADPH + H(+) = 5alpha-androstane-3beta,17beta-diol + NADP(+). The catalysed reaction is androst-4-ene-3,11,17-trione + NADPH + H(+) = 17beta-hydroxyandrost-4-ene-3,11-dione + NADP(+). The enzyme catalyses 11beta-hydroxyandrost-4-ene-3,17-dione + NADPH + H(+) = 11beta,17beta-dihydroxyandrost-4-ene-3-one + NADP(+). It functions in the pathway hormone biosynthesis; testosterone biosynthesis. It participates in steroid metabolism. In terms of biological role, catalyzes the conversion of 17-oxosteroids to 17beta-hydroxysteroids. Favors the reduction of androstenedione to testosterone. Testosterone is the key androgen driving male development and function. Uses NADPH while the two other EDH17B enzymes use NADH. Androgens such as epiandrosterone, dehydroepiandrosterone, androsterone and androstanedione are accepted as substrates and reduced at C-17. Can reduce 11-ketoandrostenedione as well as 11beta-hydroxyandrostenedione at C-17 to the respective testosterone forms. Plays a role in the rate-limiting-step for the maximum level of testosterone production by the testis but does not affect basal testosterone production. The polypeptide is 17-beta-hydroxysteroid dehydrogenase type 3 (Mus musculus (Mouse)).